Consider the following 212-residue polypeptide: MEPLYQQTHKQVHEIQSHMGRLETADKQSVHLVENEIQASIDQIFSHLERLEILSSKEPPNRRQNAKLRVDQLKYDVQHLQTALRNFQHRRQAKEQQERQRDELLSRTFTTNDSDTTIPMDESLQFNSSLQNIHHGMDDLIGGGHSILEGLRAQRLTLKGTQKKILDIANMLGLSNTVMRLIEKRAFQDKYFMIGGMLLTCAVMFLVVQYLT.

M1 is modified (N-acetylmethionine). The Cytoplasmic portion of the chain corresponds to 1–190; it reads MEPLYQQTHK…LIEKRAFQDK (190 aa). Residues 61 to 107 are a coiled coil; that stretch reads NRRQNAKLRVDQLKYDVQHLQTALRNFQHRRQAKEQQERQRDELLSR. Positions 118 to 120 match the IxM motif; signal for cargo packaging into COPII-coated vesicles motif; sequence IPM. A helical; Anchor for type IV membrane protein membrane pass occupies residues 191-211; sequence YFMIGGMLLTCAVMFLVVQYL. A topological domain (vesicular) is located at residue T212.

It belongs to the GOSR2 family. Part of a unique SNARE complex composed of the Golgi SNAREs GOSR1, STX5 and YKT6. Interacts with BET1.

The protein localises to the golgi apparatus. It localises to the cis-Golgi network membrane. Its subcellular location is the golgi apparatus membrane. The protein resides in the endoplasmic reticulum membrane. Its function is as follows. Involved in transport of proteins from the cis/medial-Golgi to the trans-Golgi network. This is Golgi SNAP receptor complex member 2 (Gosr2) from Rattus norvegicus (Rat).